The chain runs to 231 residues: MQLYSSESESDDSQYWVDWFLGLKGNEFFCEVDEDFIQDRFNLTGLSHEVPHYSQSLDLILDVLDPDLPEEVQDEVEASARHLYGLIHARYILTAQGLYKMLEKYKKCDFGHCPRVLCNGQPMLPVGLSDIAHTKSVKLYCPRCEDVYTPKSQRHASIDGAYFGTSFPHMLFQVYPELAVPKSQERYIPRIFGFKVHSYSATFKKQDVYKEKQKKRLQGAEAESKNKLAIT.

This sequence belongs to the casein kinase 2 subunit beta family. In terms of assembly, tetramer composed of two alpha chains, one beta chain and one beta' chain. Phosphorylated by alpha subunit.

In terms of biological role, regulatory subunit of casein kinase II/CK2. As part of the kinase complex regulates the basal catalytic activity of the alpha subunit a constitutively active serine/threonine-protein kinase that phosphorylates a large number of substrates containing acidic residues C-terminal to the phosphorylated serine or threonine. The chain is Casein kinase II subunit beta from Schizosaccharomyces pombe (strain 972 / ATCC 24843) (Fission yeast).